Reading from the N-terminus, the 220-residue chain is Imidazoleglycerol-phosphate dehydratase (220 aa).

Substrate contacts are provided by residues Glu-14, 64 to 72 (HMIHALAKH), 90 to 94 (HHTTE), Arg-116, and Arg-138. Residues His-64, His-90, His-91, and Glu-94 each coordinate Mn(2+). His-162, His-186, His-187, and Glu-190 together coordinate Mn(2+). Substrate contacts are provided by residues 186–194 (HHRSESAFK) and 214–216 (STK).

The protein belongs to the imidazoleglycerol-phosphate dehydratase family. Mn(2+) serves as cofactor.

The catalysed reaction is D-erythro-1-(imidazol-4-yl)glycerol 3-phosphate = 3-(imidazol-4-yl)-2-oxopropyl phosphate + H2O. It functions in the pathway amino-acid biosynthesis; L-histidine biosynthesis; L-histidine from 5-phospho-alpha-D-ribose 1-diphosphate: step 6/9. The protein is Imidazoleglycerol-phosphate dehydratase of Saccharomyces cerevisiae (strain ATCC 204508 / S288c) (Baker's yeast).